A 315-amino-acid chain; its full sequence is Aspartate carbamoyltransferase catalytic subunit (315 aa).

Residues R65 and T66 each coordinate carbamoyl phosphate. K93 is an L-aspartate binding site. Positions 115, 145, and 148 each coordinate carbamoyl phosphate. The L-aspartate site is built by R179 and R234. Residues G275 and P276 each coordinate carbamoyl phosphate.

It belongs to the aspartate/ornithine carbamoyltransferase superfamily. ATCase family. As to quaternary structure, heterododecamer (2C3:3R2) of six catalytic PyrB chains organized as two trimers (C3), and six regulatory PyrI chains organized as three dimers (R2).

It catalyses the reaction carbamoyl phosphate + L-aspartate = N-carbamoyl-L-aspartate + phosphate + H(+). It participates in pyrimidine metabolism; UMP biosynthesis via de novo pathway; (S)-dihydroorotate from bicarbonate: step 2/3. Functionally, catalyzes the condensation of carbamoyl phosphate and aspartate to form carbamoyl aspartate and inorganic phosphate, the committed step in the de novo pyrimidine nucleotide biosynthesis pathway. The chain is Aspartate carbamoyltransferase catalytic subunit from Xanthomonas campestris pv. campestris (strain 8004).